Here is a 732-residue protein sequence, read N- to C-terminus: Beta-galactosidase 5 (732 aa).

Residues 1–23 (MGTTILVLSKILTFLLTTMLIGS) form the signal peptide. The active-site Proton donor is Glu-187. Residue Glu-256 is the Nucleophile of the active site. A glycan (N-linked (GlcNAc...) asparagine) is linked at Asn-466.

This sequence belongs to the glycosyl hydrolase 35 family. Expressed in leaves and flowers.

The protein resides in the secreted. It localises to the extracellular space. It is found in the apoplast. It catalyses the reaction Hydrolysis of terminal non-reducing beta-D-galactose residues in beta-D-galactosides.. This Arabidopsis thaliana (Mouse-ear cress) protein is Beta-galactosidase 5 (BGAL5).